The chain runs to 601 residues: Urocanate hydratase (601 aa).

Residues 63–64 and Gln141 each bind NAD(+); that span reads GG. The insert stretch occupies residues 172–201; it reads SDRPSALLKQGLSPEGTAPGSGRSSAQVPG. Residues 179–200 form a disordered region; that stretch reads LKQGLSPEGTAPGSGRSSAQVP. NAD(+) is bound by residues 216 to 218, Glu236, 282 to 283, 307 to 311, 317 to 318, and Tyr368; these read GMG, NA, QTSAH, and YL. The active site involves Cys456. Residue Gly538 participates in NAD(+) binding.

This sequence belongs to the urocanase family. The cofactor is NAD(+).

It is found in the cytoplasm. The enzyme catalyses 4-imidazolone-5-propanoate = trans-urocanate + H2O. The protein operates within amino-acid degradation; L-histidine degradation into L-glutamate; N-formimidoyl-L-glutamate from L-histidine: step 2/3. Catalyzes the conversion of urocanate to 4-imidazolone-5-propionate. The chain is Urocanate hydratase from Ralstonia nicotianae (strain ATCC BAA-1114 / GMI1000) (Ralstonia solanacearum).